The primary structure comprises 189 residues: UPF0312 protein VPA0850 (189 aa).

Residues 1–22 form the signal peptide; it reads MKKSLFATGLAIAMALPLGAQA.

It belongs to the UPF0312 family. Type 1 subfamily.

Its subcellular location is the periplasm. This is UPF0312 protein VPA0850 from Vibrio parahaemolyticus serotype O3:K6 (strain RIMD 2210633).